We begin with the raw amino-acid sequence, 357 residues long: tRNA N6-adenosine threonylcarbamoyltransferase (357 aa).

Residues His115 and His119 each contribute to the Fe cation site. Residues 137-141 (LASGG), Asp170, Gly183, and Asn281 each bind substrate. Asp309 lines the Fe cation pocket.

This sequence belongs to the KAE1 / TsaD family. Requires Fe(2+) as cofactor.

The protein localises to the cytoplasm. The enzyme catalyses L-threonylcarbamoyladenylate + adenosine(37) in tRNA = N(6)-L-threonylcarbamoyladenosine(37) in tRNA + AMP + H(+). Functionally, required for the formation of a threonylcarbamoyl group on adenosine at position 37 (t(6)A37) in tRNAs that read codons beginning with adenine. Is involved in the transfer of the threonylcarbamoyl moiety of threonylcarbamoyl-AMP (TC-AMP) to the N6 group of A37, together with TsaE and TsaB. TsaD likely plays a direct catalytic role in this reaction. This Afipia carboxidovorans (strain ATCC 49405 / DSM 1227 / KCTC 32145 / OM5) (Oligotropha carboxidovorans) protein is tRNA N6-adenosine threonylcarbamoyltransferase.